The chain runs to 278 residues: Outer spore wall protein 1 (278 aa).

Its subcellular location is the spore wall. Its function is as follows. May be involved in a late step of spore wall assembly. The chain is Outer spore wall protein 1 (OSW1) from Saccharomyces cerevisiae (strain ATCC 204508 / S288c) (Baker's yeast).